The chain runs to 38 residues: Cytochrome b6-f complex subunit 5 (38 aa).

Residues 5–25 (LLSGIVLGSIPITLAGSFVTA) traverse the membrane as a helical segment.

It belongs to the PetG family. As to quaternary structure, the 4 large subunits of the cytochrome b6-f complex are cytochrome b6, subunit IV (17 kDa polypeptide, PetD), cytochrome f and the Rieske protein, while the 4 small subunits are PetG, PetL, PetM and PetN. The complex functions as a dimer.

It is found in the plastid. Its subcellular location is the chloroplast thylakoid membrane. Functionally, component of the cytochrome b6-f complex, which mediates electron transfer between photosystem II (PSII) and photosystem I (PSI), cyclic electron flow around PSI, and state transitions. PetG is required for either the stability or assembly of the cytochrome b6-f complex. The polypeptide is Cytochrome b6-f complex subunit 5 (Huperzia lucidula (Shining clubmoss)).